The sequence spans 350 residues: Protein-glutamate methylesterase/protein-glutamine glutaminase 1 (350 aa).

The Response regulatory domain maps to Lys3–Leu121. Asp54 bears the 4-aspartylphosphate mark. The CheB-type methylesterase domain occupies Pro148–Val342. Catalysis depends on residues Ser170, His197, and Asp290.

It belongs to the CheB family. In terms of processing, phosphorylated by CheA. Phosphorylation of the N-terminal regulatory domain activates the methylesterase activity.

It localises to the cytoplasm. The catalysed reaction is [protein]-L-glutamate 5-O-methyl ester + H2O = L-glutamyl-[protein] + methanol + H(+). It carries out the reaction L-glutaminyl-[protein] + H2O = L-glutamyl-[protein] + NH4(+). Its function is as follows. Involved in chemotaxis. Part of a chemotaxis signal transduction system that modulates chemotaxis in response to various stimuli. Catalyzes the demethylation of specific methylglutamate residues introduced into the chemoreceptors (methyl-accepting chemotaxis proteins or MCP) by CheR. Also mediates the irreversible deamidation of specific glutamine residues to glutamic acid. This Syntrophus aciditrophicus (strain SB) protein is Protein-glutamate methylesterase/protein-glutamine glutaminase 1.